We begin with the raw amino-acid sequence, 309 residues long: Voltage-dependent anion channel-forming protein mll4386 (309 aa).

The next 3 helical transmembrane spans lie at 32-52 (ILPQ…LARW), 58-78 (GVFN…YLSF), and 227-247 (IVCL…TPLF).

It belongs to the anion channel-forming bestrophin (TC 1.A.46) family.

Its subcellular location is the cell membrane. This chain is Voltage-dependent anion channel-forming protein mll4386, found in Mesorhizobium japonicum (strain LMG 29417 / CECT 9101 / MAFF 303099) (Mesorhizobium loti (strain MAFF 303099)).